The following is a 39-amino-acid chain: CISARYPCSNSKDCCSGSCGIFWTCYLRKDPCSKECLAP.

4 cysteine pairs are disulfide-bonded: Cys1-Cys15, Cys8-Cys19, Cys14-Cys36, and Cys25-Cys32.

As to expression, expressed by the venom gland.

It localises to the secreted. Its function is as follows. Causes paralysis to insect larvae (H.virescens). This toxin is active only on insects. This is U1-nemetoxin-Csp1c from Calisoga sp. (Spider).